The primary structure comprises 1022 residues: Leucine--tRNA ligase (1022 aa).

A 'HIGH' region motif is present at residues 47-57 (PYPNSPMHLGH). Residues 697–701 (KMSKS) carry the 'KMSKS' region motif. Residue Lys-700 participates in ATP binding.

This sequence belongs to the class-I aminoacyl-tRNA synthetase family.

It localises to the cytoplasm. The enzyme catalyses tRNA(Leu) + L-leucine + ATP = L-leucyl-tRNA(Leu) + AMP + diphosphate. This Ignicoccus hospitalis (strain KIN4/I / DSM 18386 / JCM 14125) protein is Leucine--tRNA ligase.